The primary structure comprises 142 residues: Hemoglobin subunit alpha (142 aa).

The region spanning 2-142 is the Globin domain; sequence VLSPADKTNV…VSTVLVSKYR (141 aa). A Phosphoserine modification is found at Ser-4. Lys-8 is subject to N6-succinyllysine. Thr-9 bears the Phosphothreonine mark. Lys-12 is modified (N6-succinyllysine). Position 17 is an N6-acetyllysine; alternate (Lys-17). The residue at position 17 (Lys-17) is an N6-succinyllysine; alternate. The residue at position 25 (Tyr-25) is a Phosphotyrosine. Residue Ser-36 is modified to Phosphoserine. Lys-41 carries the post-translational modification N6-succinyllysine. Position 50 is a phosphoserine (Ser-50). His-59 lines the O2 pocket. His-88 contacts heme b. Ser-103 carries the post-translational modification Phosphoserine. The residue at position 109 (Thr-109) is a Phosphothreonine. A phosphoserine mark is found at Ser-125 and Ser-132. A Phosphothreonine modification is found at Thr-135. Ser-139 is modified (phosphoserine).

It belongs to the globin family. Heterotetramer of two alpha chains and two beta chains. Red blood cells.

In terms of biological role, involved in oxygen transport from the lung to the various peripheral tissues. Hemopressin acts as an antagonist peptide of the cannabinoid receptor CNR1. Hemopressin-binding efficiently blocks cannabinoid receptor CNR1 and subsequent signaling. The polypeptide is Hemoglobin subunit alpha (HBA) (Antrozous pallidus (Pallid bat)).